The following is a 530-amino-acid chain: MAVSSAFVVTPKLEKLLANHHNPTYSSSPAPLDVIGIRALPMNNRNKRGLIQRARCEISPSNKAASISALEQLKTSAIDRYTKERSSIVVIGLSIHTAPVEMREKLAIPEAEWPRAIAELCGLNHIEEAAVLSTCNRMEIYVLALSQHRGVKEVTEWMSKTSGIPVSEICQHRFLLYNKDVTQHIFEVSAGLDSLVLGEGQILAQVKQVVKVGQGVNGFGRNISGLFKHAITVGKRVRTETNIAAGAVSVSSAAVELALMKLPESSHASSARMLVVGAGKMGKLVIKHLVAKGCTKMVVVNRSEEKVAAVRNEMPPGVEIIYKPLDEMLSCAAEADVVFTSTASETPLFLKEQVETLPPVRDARLFVDISVPRNVGSCVAEIDGTRVFNVDDLKEVVAANKEDRVRKAMDAQAIITDESKHFEAWRDSLETVPTIKKLRGYTERIIAAEIEKSLPKMGIDMNKKMRKTVDDLIRGIVNKLLHGPMQHLRCDGNDSRTLSETLDNMQALNRMYGLDAEILEEKIRAKVEKK.

The transit peptide at 1 to 64 directs the protein to the chloroplast; it reads MAVSSAFVVT…RCEISPSNKA (64 aa). Substrate contacts are provided by residues 134–137, serine 194, 199–201, and glutamine 205; these read TCNR and EGQ. The Nucleophile role is filled by cysteine 135. An NADP(+)-binding site is contributed by 277-282; it reads GAGKMG.

Belongs to the glutamyl-tRNA reductase family. In terms of tissue distribution, expressed in roots and flowers. Detected in leaves, hypocotyls and cotyledons.

Its subcellular location is the plastid. It localises to the chloroplast. It carries out the reaction (S)-4-amino-5-oxopentanoate + tRNA(Glu) + NADP(+) = L-glutamyl-tRNA(Glu) + NADPH + H(+). The protein operates within porphyrin-containing compound metabolism; protoporphyrin-IX biosynthesis; 5-aminolevulinate from L-glutamyl-tRNA(Glu): step 1/2. Its pathway is porphyrin-containing compound metabolism; chlorophyll biosynthesis. Functionally, catalyzes the NADPH-dependent reduction of glutamyl-tRNA(Glu) to glutamate 1-semialdehyde (GSA). Probably involved in wound-induced supply of heme to defensive hemoproteins outside plastids. The protein is Glutamyl-tRNA reductase 2, chloroplastic (HEMA2) of Arabidopsis thaliana (Mouse-ear cress).